The following is a 230-amino-acid chain: V-type proton ATPase subunit E (230 aa).

The protein belongs to the V-ATPase E subunit family. In terms of assembly, V-ATPase is a heteromultimeric enzyme composed of a peripheral catalytic V1 complex (components A to H) attached to an integral membrane V0 proton pore complex (components: a, c, c', c'', d, e, f and VOA1).

Its subcellular location is the vacuole membrane. Its function is as follows. Subunit of the V1 complex of vacuolar(H+)-ATPase (V-ATPase), a multisubunit enzyme composed of a peripheral complex (V1) that hydrolyzes ATP and a membrane integral complex (V0) that translocates protons. V-ATPase is responsible for acidifying and maintaining the pH of intracellular compartments. This Neurospora crassa (strain ATCC 24698 / 74-OR23-1A / CBS 708.71 / DSM 1257 / FGSC 987) protein is V-type proton ATPase subunit E.